The following is a 1550-amino-acid chain: Cellulose synthase 1 (1550 aa).

The catalytic stretch occupies residues 1 to 741 (MPEVRSSTQS…KERVLKGTVK (741 aa)). 3 helical membrane passes run 26–46 (GAGL…TSVT), 47–67 (LPPE…FIVG), and 106–126 (GLLG…LFLS). The segment at 147 to 240 (EWPTVDIFVP…YILIFDCDHV (94 aa)) is catalytic subdomain A. Asp189 is a catalytic residue. Residues Asp236 and Asp238 each contribute to the substrate site. A catalytic subdomain B region spans residues 317-377 (TAIEQIGGFA…GQRVRWARGM (61 aa)). The active site involves Asp333. 5 helical membrane passes run 398-418 (LCYL…IFLS), 423-443 (FLFF…AYAI), 468-488 (VYET…LLSP), 507-527 (FDLG…GGLA), and 547-567 (LLNS…IAVG). One can recognise a PilZ domain in the interval 572–647 (QKRNSHRIPA…PARIIRAGNG (76 aa)). Disordered regions lie at residues 708–731 (VHRS…NPSR) and 768–813 (APAH…QPLA). The tract at residues 742 to 1550 (MVSLLALLTF…KQLEDERRKS (809 aa)) is cyclic di-GMP binding domain. Low complexity predominate over residues 768-796 (APAHQPEASDLPPLPALLPATSGAAQAGS). A helical membrane pass occupies residues 1513–1533 (VLLVGLLGCILIVSVLARALA).

It in the N-terminal section; belongs to the glycosyltransferase 2 family. This sequence in the C-terminal section; belongs to the AcsB/BcsB family. It depends on Mg(2+) as a cofactor.

It localises to the cell inner membrane. It carries out the reaction [(1-&gt;4)-beta-D-glucosyl](n) + UDP-alpha-D-glucose = [(1-&gt;4)-beta-D-glucosyl](n+1) + UDP + H(+). Its pathway is glycan metabolism; bacterial cellulose biosynthesis. Bifunctional protein comprised of a catalytic subunit and a regulatory subunit. The catalytic subunit of cellulose synthase polymerizes uridine 5'-diphosphate glucose to cellulose in a processive way. The thick cellulosic mats generated by this enzyme probably provide a specialized protective environment to the bacterium. The regulatory subunit binds bis-(3'-5') cyclic diguanylic acid (c-di-GMP). This chain is Cellulose synthase 1 (acsAB), found in Novacetimonas hansenii (Komagataeibacter hansenii).